The sequence spans 332 residues: ATP-dependent 6-phosphofructokinase (332 aa).

Glycine 11 provides a ligand contact to ATP. 21–25 (RSVVR) lines the ADP pocket. Residues 72 to 73 (RC) and 102 to 105 (GDGS) contribute to the ATP site. Residue aspartate 103 participates in Mg(2+) binding. 126-128 (TID) contacts substrate. Catalysis depends on aspartate 128, which acts as the Proton acceptor. Residue arginine 155 participates in ADP binding. Substrate is bound by residues arginine 163 and 170–172 (MGR). ADP-binding positions include 186-188 (GAE), arginine 212, and 214-216 (KLH). Substrate is bound by residues glutamate 223, arginine 256, and 262-265 (HIQR).

Belongs to the phosphofructokinase type A (PFKA) family. ATP-dependent PFK group I subfamily. Prokaryotic clade 'B1' sub-subfamily. As to quaternary structure, homotetramer. Mg(2+) is required as a cofactor.

The protein localises to the cytoplasm. It catalyses the reaction beta-D-fructose 6-phosphate + ATP = beta-D-fructose 1,6-bisphosphate + ADP + H(+). The protein operates within carbohydrate degradation; glycolysis; D-glyceraldehyde 3-phosphate and glycerone phosphate from D-glucose: step 3/4. With respect to regulation, allosterically activated by ADP and other diphosphonucleosides, and allosterically inhibited by phosphoenolpyruvate. In terms of biological role, catalyzes the phosphorylation of D-fructose 6-phosphate to fructose 1,6-bisphosphate by ATP, the first committing step of glycolysis. The protein is ATP-dependent 6-phosphofructokinase of Halothermothrix orenii (strain H 168 / OCM 544 / DSM 9562).